Here is a 145-residue protein sequence, read N- to C-terminus: D-aminoacyl-tRNA deacylase (145 aa).

Residues 137 to 138 (GP) carry the Gly-cisPro motif, important for rejection of L-amino acids motif.

Belongs to the DTD family. Homodimer.

It localises to the cytoplasm. The catalysed reaction is glycyl-tRNA(Ala) + H2O = tRNA(Ala) + glycine + H(+). It catalyses the reaction a D-aminoacyl-tRNA + H2O = a tRNA + a D-alpha-amino acid + H(+). Its function is as follows. An aminoacyl-tRNA editing enzyme that deacylates mischarged D-aminoacyl-tRNAs. Also deacylates mischarged glycyl-tRNA(Ala), protecting cells against glycine mischarging by AlaRS. Acts via tRNA-based rather than protein-based catalysis; rejects L-amino acids rather than detecting D-amino acids in the active site. By recycling D-aminoacyl-tRNA to D-amino acids and free tRNA molecules, this enzyme counteracts the toxicity associated with the formation of D-aminoacyl-tRNA entities in vivo and helps enforce protein L-homochirality. In Pseudomonas putida (strain GB-1), this protein is D-aminoacyl-tRNA deacylase.